A 460-amino-acid chain; its full sequence is Hydroxyproline dehydrogenase (460 aa).

At Lys-310 the chain carries N6-acetyllysine.

The protein belongs to the proline oxidase family. FAD serves as cofactor.

The catalysed reaction is trans-4-hydroxy-L-proline + a quinone = (3R,5S)-1-pyrroline-3-hydroxy-5-carboxylate + a quinol + H(+). The enzyme catalyses L-proline + a quinone = (S)-1-pyrroline-5-carboxylate + a quinol + H(+). With respect to regulation, hydroproxyproline dehydrogenase activity is inhibited by THFA,(1R,3R)3-OH-cyclopentane-COOH and 5-OH-1H-pyrazole-3-COOH. Dehydrogenase that converts trans-4-L-hydroxyproline to delta-1-pyrroline-3-hydroxy-5-carboxylate (Hyp) using ubiquinone-10 as the terminal electron acceptor. Can also use proline as a substrate but with a very much lower efficiency. Does not react with other diastereomers of Hyp: trans-4-D-hydroxyproline and cis-4-L-hydroxyproline. Ubiquininone analogs such as menadione, duroquinone and ubiquinone-1 react more efficiently than oxygen as the terminal electron acceptor during catalysis. The chain is Hydroxyproline dehydrogenase from Homo sapiens (Human).